Here is a 121-residue protein sequence, read N- to C-terminus: Large ribosomal subunit protein uL14 (121 aa).

This sequence belongs to the universal ribosomal protein uL14 family. Part of the 50S ribosomal subunit. Forms a cluster with proteins L3 and L19. In the 70S ribosome, L14 and L19 interact and together make contacts with the 16S rRNA in bridges B5 and B8.

Its function is as follows. Binds to 23S rRNA. Forms part of two intersubunit bridges in the 70S ribosome. This chain is Large ribosomal subunit protein uL14, found in Prochlorococcus marinus (strain SARG / CCMP1375 / SS120).